The chain runs to 160 residues: Endoribonuclease YbeY (160 aa).

Residues His124, His128, and His134 each coordinate Zn(2+).

The protein belongs to the endoribonuclease YbeY family. Zn(2+) is required as a cofactor.

The protein localises to the cytoplasm. Single strand-specific metallo-endoribonuclease involved in late-stage 70S ribosome quality control and in maturation of the 3' terminus of the 16S rRNA. In Jannaschia sp. (strain CCS1), this protein is Endoribonuclease YbeY.